We begin with the raw amino-acid sequence, 108 residues long: Thiosulfate sulfurtransferase GlpE (108 aa).

The 89-residue stretch at 17 to 105 (RQGAAVLVDI…WHRRFPANVA (89 aa)) folds into the Rhodanese domain. C65 (cysteine persulfide intermediate) is an active-site residue.

This sequence belongs to the GlpE family.

It localises to the cytoplasm. It catalyses the reaction thiosulfate + hydrogen cyanide = thiocyanate + sulfite + 2 H(+). It carries out the reaction thiosulfate + [thioredoxin]-dithiol = [thioredoxin]-disulfide + hydrogen sulfide + sulfite + 2 H(+). Functionally, transferase that catalyzes the transfer of sulfur from thiosulfate to thiophilic acceptors such as cyanide or dithiols. May function in a CysM-independent thiosulfate assimilation pathway by catalyzing the conversion of thiosulfate to sulfite, which can then be used for L-cysteine biosynthesis. In Salmonella agona (strain SL483), this protein is Thiosulfate sulfurtransferase GlpE.